A 473-amino-acid chain; its full sequence is NADH-quinone oxidoreductase subunit N (473 aa).

Transmembrane regions (helical) follow at residues 3-23 (LHYL…LVIA), 30-50 (LAFY…CSLL), 62-82 (FSSM…FLWL), 99-119 (FYLL…SEHF), 120-140 (ASFF…IAYS), 153-173 (YLIL…IVYL), 195-215 (MLFT…LSLV), 230-252 (LPTT…WKLF), 262-282 (IVLT…NLLA), 291-311 (ILAF…FLFN), 326-346 (ALLF…SILM), 368-388 (AASL…LGFM), 408-428 (FLVI…MVML), and 444-464 (VASL…PALF).

It belongs to the complex I subunit 2 family. NDH-1 is composed of 13 different subunits. Subunits NuoA, H, J, K, L, M, N constitute the membrane sector of the complex.

Its subcellular location is the cell inner membrane. It catalyses the reaction a quinone + NADH + 5 H(+)(in) = a quinol + NAD(+) + 4 H(+)(out). In terms of biological role, NDH-1 shuttles electrons from NADH, via FMN and iron-sulfur (Fe-S) centers, to quinones in the respiratory chain. The immediate electron acceptor for the enzyme in this species is believed to be ubiquinone. Couples the redox reaction to proton translocation (for every two electrons transferred, four hydrogen ions are translocated across the cytoplasmic membrane), and thus conserves the redox energy in a proton gradient. The polypeptide is NADH-quinone oxidoreductase subunit N (Shewanella woodyi (strain ATCC 51908 / MS32)).